We begin with the raw amino-acid sequence, 240 residues long: Inhibitor of growth protein 5 (240 aa).

Positions 115 to 165 (MDGSDFESTGARSLKKGRSQKEKRSSRGRGRRTSEEDTPKKKKHKSGSEFT) are disordered. Serine 118 carries the phosphoserine modification. Arginine 126 bears the Omega-N-methylarginine mark. A PHD-type zinc finger spans residues 186-235 (PTYCLCHQVSYGEMIGCDNPDCPIEWFHFACVDLTTKPKGKWFCPRCVQE). Zn(2+) contacts are provided by cysteine 189, cysteine 191, cysteine 202, cysteine 207, histidine 213, cysteine 216, cysteine 229, and cysteine 232.

Belongs to the ING family. In terms of assembly, component of the HBO1 complex composed of KAT7/HBO1, MEAF6, ING5, and one scaffold subunit: complexes containing BRPF scaffold (BRPF1, BRD1/BRPF2 or BRPF3) direct KAT7/HBO1 specificity towards H3K14ac, while complexes containing JADE scaffold (JADE1, JADE2 and JADE3) mediate acetylation of histone H4. Component of the MOZ/MORF complex composed at least of ING5, KAT6A, KAT6B, MEAF6 and one of BRPF1, BRD1/BRPF2 and BRPF3. Interacts with H3K4me3 and to a lesser extent with H3K4me2. Interacts with EP300 and p53/TP53. Interacts with INCA1.

The protein resides in the nucleus. It is found in the chromosome. In terms of biological role, component of the HBO1 complex, which specifically mediates acetylation of histone H3 at 'Lys-14' (H3K14ac) and, to a lower extent, acetylation of histone H4. Component of the MOZ/MORF complex which has a histone H3 acetyltransferase activity. Through chromatin acetylation it may regulate DNA replication and may function as a transcriptional coactivator. Inhibits cell growth, induces a delay in S-phase progression and enhances Fas-induced apoptosis in an INCA1-dependent manner. The sequence is that of Inhibitor of growth protein 5 (Ing5) from Mus musculus (Mouse).